We begin with the raw amino-acid sequence, 364 residues long: MHFFQSSLVAATMGAALVAAAPAADLETRGSCTFTSTSALKSGKASCSTITLQNIAVPAGETLDLTGLKTGTTVVFDGTTTFGYKEWEGPLISASGTSITIKQNPGAKIDCDGARWWDGKGGNGGKKKPKFFSAHKLNKSNITGLKVYNTPVHGFSIQSDHLTIKDVLLDNSAGTKLGHNTDAFDVGSSTYITIDGATVYNQDDCLAVNSGEHITFTNGYCNGGHGLSIGSVGGRSNNVVNDVTISNSQVINSQNGARIKTVYGATGSVTGVKFQDISLKGITKYGIVVQQDYENGKPTGKPTNGVKVSDITFEKVTGTVTSSATDIYILCGSGSCTNWTWSGNSVTGGKKSSSCKNVPAGASC.

The N-terminal stretch at 1–20 (MHFFQSSLVAATMGAALVAA) is a signal peptide. Positions 21 to 29 (APAADLETR) are excised as a propeptide. A disulfide bridge connects residues Cys-32 and Cys-47. N-linked (GlcNAc...) asparagine glycosylation is found at Asn-138 and Asn-141. 6 PbH1 repeats span residues 159–188 (SDHL…DVGS), 189–210 (STYI…AVNS), 211–231 (GEHI…SIGS), 240–261 (VNDV…RIKT), 269–291 (VTGV…VVQQ), and 303–324 (TNGV…TSSA). The Proton donor role is filled by Asp-203. A disulfide bridge links Cys-205 with Cys-221. The active site involves His-225. A disulfide bond links Cys-331 and Cys-336. Asn-338 is a glycosylation site (N-linked (GlcNAc...) asparagine). A disulfide bond links Cys-355 and Cys-364.

Belongs to the glycosyl hydrolase 28 family.

The protein localises to the secreted. It catalyses the reaction (1,4-alpha-D-galacturonosyl)n+m + H2O = (1,4-alpha-D-galacturonosyl)n + (1,4-alpha-D-galacturonosyl)m.. In terms of biological role, involved in maceration and soft-rotting of plant tissue. Hydrolyzes the 1,4-alpha glycosidic bonds of de-esterified pectate in the smooth region of the plant cell wall. The polypeptide is Probable endopolygalacturonase B (pgaB) (Aspergillus fumigatus (strain ATCC MYA-4609 / CBS 101355 / FGSC A1100 / Af293) (Neosartorya fumigata)).